The following is a 308-amino-acid chain: Acetyl-coenzyme A carboxylase carboxyl transferase subunit beta (308 aa).

The 270-residue stretch at 25–294 (VWTKCTSCEQ…PLVVSVNDAP (270 aa)) folds into the CoA carboxyltransferase N-terminal domain. Cys29, Cys32, Cys48, and Cys51 together coordinate Zn(2+). The C4-type zinc finger occupies 29–51 (CTSCEQVLYYAELERNLEVCPKC).

Belongs to the AccD/PCCB family. In terms of assembly, acetyl-CoA carboxylase is a heterohexamer composed of biotin carboxyl carrier protein (AccB), biotin carboxylase (AccC) and two subunits each of ACCase subunit alpha (AccA) and ACCase subunit beta (AccD). It depends on Zn(2+) as a cofactor.

It localises to the cytoplasm. The enzyme catalyses N(6)-carboxybiotinyl-L-lysyl-[protein] + acetyl-CoA = N(6)-biotinyl-L-lysyl-[protein] + malonyl-CoA. Its pathway is lipid metabolism; malonyl-CoA biosynthesis; malonyl-CoA from acetyl-CoA: step 1/1. Functionally, component of the acetyl coenzyme A carboxylase (ACC) complex. Biotin carboxylase (BC) catalyzes the carboxylation of biotin on its carrier protein (BCCP) and then the CO(2) group is transferred by the transcarboxylase to acetyl-CoA to form malonyl-CoA. This Vibrio cholerae serotype O1 (strain ATCC 39315 / El Tor Inaba N16961) protein is Acetyl-coenzyme A carboxylase carboxyl transferase subunit beta.